We begin with the raw amino-acid sequence, 304 residues long: E3 ubiquitin-protein ligase RNF115 (304 aa).

Position 2 is an N-acetylalanine (Ala2). Positions Pro95–Ser138 are disordered. Residues Gln98–His110 show a composition bias toward basic and acidic residues. 2 positions are modified to phosphoserine; by PKB/AKT1: Ser132 and Ser133. Residues Cys228–Arg269 form an RING-type zinc finger. Residues Leu272–Phe304 are disordered. The span at Arg279 to Ser296 shows a compositional bias: polar residues.

Interacts with RAB7A. Interacts with EGFR and FLT3. Interacts with BST2. Interacts with STX17. Interacts with YWHAE. Phosphorylated by AKT1, allowing association with the 14-3-3 chaperones that facilitates associating with TLRs. In terms of processing, RING-type zinc finger-dependent and E2-dependent autoubiquitination. Post-translationally, deubiquitinated by USP9X; antogonizing its autoubiquitination and subsequent proteasomal degradation. Expressed at extremely low levels in normal breast, prostate, lung, colon. Higher levels of expression are detected in heart, skeletal muscle, testis as well as in breast and prostate cancer cells.

The protein resides in the cytoplasm. The protein localises to the nucleus. It is found in the endoplasmic reticulum. Its subcellular location is the golgi apparatus. It carries out the reaction S-ubiquitinyl-[E2 ubiquitin-conjugating enzyme]-L-cysteine + [acceptor protein]-L-lysine = [E2 ubiquitin-conjugating enzyme]-L-cysteine + N(6)-ubiquitinyl-[acceptor protein]-L-lysine.. Its pathway is protein modification; protein ubiquitination. In terms of biological role, E3 ubiquitin-protein ligase that catalyzes the 'Lys-48'- and/or 'Lys-63'-linked polyubiquitination of various substrates and thereby plays a role in a number of signaling pathways including autophagy, innate immunity, cell proliferation and cell death. Plays a role in the endosomal trafficking and degradation of membrane receptors including EGFR, FLT3, MET and CXCR4 through their polyubiquitination. Participates together with BST2 in antiviral immunity by facilitating the internalization of HIV-1 virions into intracellular vesicles leading to their lysosomal degradation. Also possesses an antiviral activity independently of BST2 by promoting retroviral GAG proteins ubiquitination, redistribution to endo-lysosomal compartments and, ultimately, lysosomal degradation. Catalyzes distinct types of ubiquitination on MAVS and STING1 at different phases of viral infection to promote innate antiviral response. Mediates the 'Lys-48'-linked ubiquitination of MAVS leading to its proteasomal degradation and ubiquitinates STING1 via 'Lys-63'-linked polyubiquitination, critical for its oligomerization and the subsequent recruitment of TBK1. Plays a positive role in the autophagosome-lysosome fusion by interacting with STX17 and enhancing its stability without affecting 'Lys-48'- or 'Lys-63'-linked polyubiquitination levels, which in turn promotes autophagosome maturation. Negatively regulates TLR-induced expression of proinflammatory cytokines by catalyzing 'Lys-11'-linked ubiquitination of RAB1A and RAB13 to inhibit post-ER trafficking of TLRs to the Golgi by RAB1A and subsequently from the Golgi apparatus to the cell surface by RAB13. This Homo sapiens (Human) protein is E3 ubiquitin-protein ligase RNF115.